Reading from the N-terminus, the 570-residue chain is Protein mom-5 (570 aa).

Positions 1–16 (MHRHILILFLFGCLSA) are cleaved as a signal peptide. Residues 17 to 230 (DQRLSSTSIS…FDGRVRRILR (214 aa)) lie on the Extracellular side of the membrane. Positions 32-148 (STTRKCEHIT…FPVTDLCVGK (117 aa)) constitute an FZ domain. 5 cysteine pairs are disulfide-bonded: C37–C98, C45–C91, C82–C119, C108–C145, and C112–C136. N51 is a glycosylation site (N-linked (GlcNAc...) asparagine). N149 carries an N-linked (GlcNAc...) asparagine glycan. The helical transmembrane segment at 231–251 (IWTAAWSVACFVCSLFTLVTF) threads the bilayer. The Cytoplasmic segment spans residues 252–264 (LVDLSRFAYPVRP). A helical membrane pass occupies residues 265–285 (ILYLAFCYLAISTVYMIGVVG). The Extracellular portion of the chain corresponds to 286 to 319 (EDGFACGTYGSTPTTLVTQGGENVGCSALAVVHY). Residues 320 to 340 (FFFMSSCAWWLVLCLAWFLAA) traverse the membrane as a helical segment. Residues 341–348 (NLKWGAES) are Cytoplasmic-facing. Residues 349-369 (IAALSPYFHAMCWGVPAVLSV) form a helical membrane-spanning segment. Residues 370 to 395 (TVLVTNSVDGDVFTGICSVGNLNPSA) lie on the Extracellular side of the membrane. A helical transmembrane segment spans residues 396-416 (LVYFFFTPIVVSLALGAVLLV). At 417–449 (CGIWSMIRIRSYIKLQHADVERNISKLEKLMLR) the chain is on the cytoplasmic side. A helical transmembrane segment spans residues 450 to 470 (IGAFAIMYSLPTAMNAAIMWY). The Extracellular segment spans residues 471 to 515 (QAVNMPAWLEGWLHHRCVRLQDRELFGFTYPVDDCPMDPKVAAPE). A helical transmembrane segment spans residues 516 to 536 (IIVFLLKYVSQLVVGITCAIW). At 537-570 (VVSSKTLSSYHKAYLALSSRSPTVPAHVDQVNMR) the chain is on the cytoplasmic side.

The protein belongs to the G-protein coupled receptor Fz/Smo family.

It localises to the cell membrane. The protein resides in the early endosome. In terms of biological role, receptor for Wnt proteins. Most frizzled receptors are coupled to the beta-catenin canonical signaling pathway, which leads to the activation of disheveled proteins, inhibition of gsk-3 kinase, nuclear accumulation of beta-catenin and activation of Wnt target genes. A second signaling pathway involving PKC and calcium fluxes has been seen for some family members, but it is not yet clear if it represents a distinct pathway or if it can be integrated in the canonical pathway, as pkc seems to be required for Wnt-mediated inactivation of gsk-3 kinase. Both pathways seem to involve interactions with G-proteins. Required in embryonic development for the correct positioning and orientation of the mitotic spindles and division planes in blastomere cells. During early embryonic cell divisions, directs the asymmetric positioning of transcription factors such as pop-1 and dsh-2 in daughter cells in order to determine cell fate specification. Acts redundantly with other Wnt receptors such as lin-17 to control vulval precursor cell specification and also the polarity of different cell types including distal tip cells, seam cells, AVG interneurons and P-cells and their descendants. Plays a role in the migration of cell types including distal tip cells and the QR neuroblast descendants, QR.p and QR.pa during larval development. Negatively regulates the unc-6/Netrin receptors unc-5 and unc-40 to control distal tip cell polarity and migration. Acts through ced-5/DOCK180 and ced-10/Rac to control both distal tip cell migration and the phagocytic clearance of apoptotic cell corpses. Furthermore, it is also required for the migration and axon guidance of the different neuronal cell types including CAN, ALM, HSN and the two mechanosensory neurons AVM and PVM. Mediates Wnt receptor cfz-2 in directing ALM migration, but may also act redundantly with the Wnt receptors cfz-2 and mig-1 to direct the migration of other neuronal cell types including CAN and HSN. Mediates Wnt ligand egl-20 in the control of the anterior-posterior axon guidance of AVM and PVM neurons. The sequence is that of Protein mom-5 from Caenorhabditis elegans.